The chain runs to 34 residues: Photosystem II reaction center protein Psb30 (34 aa).

Residues 7 to 27 (VAQLLALFVIITSGPAIIILI) traverse the membrane as a helical segment.

The protein belongs to the Psb30/Ycf12 family. As to quaternary structure, PSII is composed of 1 copy each of membrane proteins PsbA, PsbB, PsbC, PsbD, PsbE, PsbF, PsbH, PsbI, PsbJ, PsbK, PsbL, PsbM, PsbT, PsbX, PsbY, PsbZ, Psb30/Ycf12, peripheral proteins of the oxygen-evolving complex and a large number of cofactors. It forms dimeric complexes.

It localises to the plastid. The protein resides in the chloroplast thylakoid membrane. A core subunit of photosystem II (PSII), probably helps stabilize the reaction center. The protein is Photosystem II reaction center protein Psb30 of Guillardia theta (Cryptophyte).